A 725-amino-acid chain; its full sequence is Catalase-peroxidase (725 aa).

The segment at residues Trp98 to Tyr226 is a cross-link (tryptophyl-tyrosyl-methioninium (Trp-Tyr) (with M-252)). His99 (proton acceptor) is an active-site residue. The tryptophyl-tyrosyl-methioninium (Tyr-Met) (with W-98) cross-link spans Tyr226–Met252. Heme b is bound at residue His267.

This sequence belongs to the peroxidase family. Peroxidase/catalase subfamily. Homodimer or homotetramer. It depends on heme b as a cofactor. In terms of processing, formation of the three residue Trp-Tyr-Met cross-link is important for the catalase, but not the peroxidase activity of the enzyme.

The enzyme catalyses H2O2 + AH2 = A + 2 H2O. It carries out the reaction 2 H2O2 = O2 + 2 H2O. Functionally, bifunctional enzyme with both catalase and broad-spectrum peroxidase activity. The chain is Catalase-peroxidase from Paracoccus denitrificans (strain Pd 1222).